Consider the following 436-residue polypeptide: UDP-N-acetylmuramate--L-alanine ligase (436 aa).

Residue 108-114 (GAHGKTS) participates in ATP binding.

Belongs to the MurCDEF family.

The protein localises to the cytoplasm. The enzyme catalyses UDP-N-acetyl-alpha-D-muramate + L-alanine + ATP = UDP-N-acetyl-alpha-D-muramoyl-L-alanine + ADP + phosphate + H(+). Its pathway is cell wall biogenesis; peptidoglycan biosynthesis. Functionally, cell wall formation. The protein is UDP-N-acetylmuramate--L-alanine ligase of Bacillus cytotoxicus (strain DSM 22905 / CIP 110041 / 391-98 / NVH 391-98).